The sequence spans 616 residues: MNRRIVLLPETLTHRIAAGEVVERPASIVKELLENALDSGATDINVELERGGCGLIRVADNGSGIFAQDVTLAFARHATSKIAEFDDLYRVRSFGFRGEALASIASISRTELVTRTADDLAGMRIVVEGGNICEKTEAGCPIGTSITVSRIFDSVPVRKKFLKAEATERAYCLDVITRLSLANPEVRIRVFSKGRELCHYPATSRLSERVALVLGNADADRLQPIEGETDRVRVTGFASRPDFTCATTRQIYTFVNRRHVRDHLLNHAVMTAYRRVIEPRRYPAVVLYVDLDPADVDVNVHPAKLEVRFRQPRTVYEAVVEALSGMLRGMGQSALSLTRYGPAGTAEIGHIPQEDYESRISEALRRYSLASGSRKMMYGTGTEANPVNKKHFLAERIRGEEIHARESLLLSPAPALPQNSFHPVFADLVYLGSLWDSYLIFSVADGMLLIDQHAAHERILFEKIKKAAERNKTAVQVLLIPEILNLSRPDFERFGDVVPLLEQVGIEAEPFGGEEIIIKALPTLLAHLDPGVLVKDLIAECADRGGGLSLQEKGEKIYAYLACRGAVKAGQKLIREEVAQLCRDLDATPFAATCPHGRPVYVLYPLKDIERMFRRR.

This sequence belongs to the DNA mismatch repair MutL/HexB family.

This protein is involved in the repair of mismatches in DNA. It is required for dam-dependent methyl-directed DNA mismatch repair. May act as a 'molecular matchmaker', a protein that promotes the formation of a stable complex between two or more DNA-binding proteins in an ATP-dependent manner without itself being part of a final effector complex. In Syntrophus aciditrophicus (strain SB), this protein is DNA mismatch repair protein MutL.